A 311-amino-acid chain; its full sequence is Malate dehydrogenase (311 aa).

Residues 7–13 (GAAGGIG) and aspartate 34 contribute to the NAD(+) site. Substrate contacts are provided by arginine 81 and arginine 87. NAD(+)-binding positions include asparagine 94 and 117–119 (ITN). Substrate-binding residues include asparagine 119 and arginine 153. The active-site Proton acceptor is the histidine 177. Methionine 227 serves as a coordination point for NAD(+).

This sequence belongs to the LDH/MDH superfamily. MDH type 1 family. In terms of assembly, homodimer.

It catalyses the reaction (S)-malate + NAD(+) = oxaloacetate + NADH + H(+). Its function is as follows. Catalyzes the reversible oxidation of malate to oxaloacetate. The polypeptide is Malate dehydrogenase (Aliivibrio fischeri (strain ATCC 700601 / ES114) (Vibrio fischeri)).